Consider the following 455-residue polypeptide: Tyramine receptor Ser-2 (455 aa).

At 1–60 the chain is on the extracellular side; it reads MFRNYTDSVQEMVLRAIDSIRDSVINASSAVSTTTLPPLDIPMTSMKPPSIIPTVELVLG. Residues asparagine 4 and asparagine 26 are each glycosylated (N-linked (GlcNAc...) asparagine). Residues 61–83 traverse the membrane as a helical segment; that stretch reads TITYLVIIAMTVVGNTLVVVAVF. The Cytoplasmic portion of the chain corresponds to 84 to 93; it reads SYRPLKKVQN. A helical transmembrane segment spans residues 94-115; the sequence is YFLVSLAASDLAVAIFVMPLHV. Over 116–133 the chain is Extracellular; it reads VTFLAGGKWLLGVTVCQF. An intrachain disulfide couples cysteine 131 to cysteine 209. The helical transmembrane segment at 134-154 threads the bilayer; it reads FTTADILLCTSSILNLCAIAL. Topologically, residues 155–174 are cytoplasmic; that stretch reads DRYWAIHNPINYAQKRTTKF. Residues 175 to 197 form a helical membrane-spanning segment; that stretch reads VCIVIVIVWILSMLISVPPIIGW. Over 198–221 the chain is Extracellular; that stretch reads NNWQENMMEDSCGLSTEKAFVVFS. A helical transmembrane segment spans residues 222–243; the sequence is AAGSFFLPLLVMVVVYVKIFIS. Residues 244–370 lie on the Cytoplasmic side of the membrane; sequence ARQRIRTNRG…VAKEKRAAKT (127 aa). A helical transmembrane segment spans residues 371–392; the sequence is IAVIIFVFSFCWLPFFVAYVIR. The Extracellular portion of the chain corresponds to 393–407; sequence PFCETCKLHAKVEQA. The chain crosses the membrane as a helical span at residues 408 to 428; sequence FTWLGYINSSLNPFLYGILNL. Over 429–455 the chain is Cytoplasmic; it reads EFRRAFKKILCPKAVLEQRRRRMSAQP.

The protein belongs to the G-protein coupled receptor 1 family. In terms of tissue distribution, the different isoforms are expressed in specific, but overlapping sets of sensory, inter- and motor neurons, including AIY, AIZ and RIA interneurons. They are also expressed in pharyngeal cells, head muscles and excretory gland cells.

It localises to the cell membrane. Functionally, G-protein coupled receptor for tyramine, a known neurotransmitter and neuromodulator and direct precursor of octopamine. The rank order of potency is tyramine &gt; octopamine &gt; dopamine &gt; serotonin &gt; epinephrine = norepinephrine. The protein is Tyramine receptor Ser-2 (ser-2) of Caenorhabditis elegans.